The following is a 1849-amino-acid chain: Mitogen-activated protein kinase kinase kinase mkh1 (1849 aa).

Residues 1556–1825 (WFKGQLIGKG…TKLLAEHPFC (270 aa)) form the Protein kinase domain. Residues 1562 to 1570 (IGKGTYGRV) and lysine 1585 contribute to the ATP site. Residue aspartate 1686 is the Proton acceptor of the active site.

Belongs to the protein kinase superfamily. STE Ser/Thr protein kinase family. MAP kinase kinase kinase subfamily.

It carries out the reaction L-seryl-[protein] + ATP = O-phospho-L-seryl-[protein] + ADP + H(+). It catalyses the reaction L-threonyl-[protein] + ATP = O-phospho-L-threonyl-[protein] + ADP + H(+). Functionally, mitogen-activated protein kinase kinase kinase, part of the mkh1-mkk1-spm1 MAPK cascade that regulates vegetative growth, conidial formation, colony surface hydrophobicity, osmotic stress, cell wall integrity maintenance, carbon and nitrogen source utilization, chitin distribution, septa formation, and pathogenicity. This is Mitogen-activated protein kinase kinase kinase mkh1 from Cytospora mali (Apple Valsa canker fungus).